A 443-amino-acid polypeptide reads, in one-letter code: Protein FAM83A (443 aa).

Residues 311–403 (DSGVSVMTDS…YYQRNYAPDS (93 aa)) are disordered. Over residues 315–326 (SVMTDSTPESVN) the composition is skewed to polar residues. Low complexity-rich tracts occupy residues 327 to 344 (TTSEPFSSTSTASISNDS) and 388 to 399 (SNYQPNYYQRNY).

Belongs to the FAM83 family.

Its subcellular location is the cytoplasm. May function in the epidermal growth factor receptor/EGFR signaling pathway. In Xenopus laevis (African clawed frog), this protein is Protein FAM83A.